A 144-amino-acid polypeptide reads, in one-letter code: Large ribosomal subunit protein uL15 (144 aa).

The tract at residues M1–G49 is disordered. Residues R21–A31 show a composition bias toward gly residues.

Belongs to the universal ribosomal protein uL15 family. In terms of assembly, part of the 50S ribosomal subunit.

Functionally, binds to the 23S rRNA. This is Large ribosomal subunit protein uL15 from Shewanella frigidimarina (strain NCIMB 400).